The chain runs to 299 residues: Glycine--tRNA ligase alpha subunit (299 aa).

It belongs to the class-II aminoacyl-tRNA synthetase family. In terms of assembly, tetramer of two alpha and two beta subunits.

It is found in the cytoplasm. The catalysed reaction is tRNA(Gly) + glycine + ATP = glycyl-tRNA(Gly) + AMP + diphosphate. In Dictyoglomus turgidum (strain DSM 6724 / Z-1310), this protein is Glycine--tRNA ligase alpha subunit.